Here is a 178-residue protein sequence, read N- to C-terminus: Ribosome maturation factor RimP (178 aa).

This sequence belongs to the RimP family.

Its subcellular location is the cytoplasm. In terms of biological role, required for maturation of 30S ribosomal subunits. This is Ribosome maturation factor RimP from Mycobacterium avium (strain 104).